Here is a 220-residue protein sequence, read N- to C-terminus: Cobalt-precorrin-8 methylmutase (220 aa).

Substrate is bound by residues Ser-15 and Arg-38. Residue His-41 is the Proton donor/acceptor of the active site.

It belongs to the CobH/CbiC family. Homodimer.

It carries out the reaction Co-precorrin-8X = cob(II)yrinate. Its pathway is cofactor biosynthesis; adenosylcobalamin biosynthesis; cob(II)yrinate a,c-diamide from sirohydrochlorin (anaerobic route): step 9/10. Its function is as follows. Catalyzes the conversion of cobalt-precorrin-8 to cobyrinate. This chain is Cobalt-precorrin-8 methylmutase (cbiC), found in Leptospira interrogans serogroup Icterohaemorrhagiae serovar Lai (strain 56601).